The following is a 331-amino-acid chain: Fructose-1,6-bisphosphatase class 1 2 (331 aa).

Mg(2+) contacts are provided by Glu-91, Asp-112, Leu-114, and Asp-115. Substrate is bound by residues 115 to 118 (DGSS), Asn-207, Tyr-238, and Lys-268. Glu-274 contacts Mg(2+).

Belongs to the FBPase class 1 family. In terms of assembly, homotetramer. Requires Mg(2+) as cofactor.

The protein resides in the cytoplasm. The enzyme catalyses beta-D-fructose 1,6-bisphosphate + H2O = beta-D-fructose 6-phosphate + phosphate. The protein operates within carbohydrate biosynthesis; Calvin cycle. The polypeptide is Fructose-1,6-bisphosphatase class 1 2 (Acaryochloris marina (strain MBIC 11017)).